The sequence spans 630 residues: Zinc finger protein MSN4 (630 aa).

Met1 is subject to N-acetylmethionine. Residues 37–56 are compositionally biased toward low complexity; sequence TTNVSATSSNDNSANNSISS. 2 disordered regions span residues 37–77 and 115–137; these read TTNV…ATNT and FVND…DKIY. Ser178 is subject to Phosphoserine. Positions 237 to 245 match the 9aaTAD motif; sequence SILEDFVSS. Ser263 bears the Phosphoserine mark. Residues 292-303 are compositionally biased toward polar residues; that stretch reads KNSSNSKPTQQI. 2 disordered regions span residues 292 to 322 and 360 to 379; these read KNSS…SPTT and SISS…RQQR. 2 positions are modified to phosphoserine: Ser316 and Ser319. Residues 360–373 show a composition bias toward low complexity; that stretch reads SISSSLNRISHSSS. A Phosphothreonine modification is found at Thr479. Residues 502–566 form a disordered region; the sequence is TSQAHHAAQH…KSITTIDPNN (65 aa). The span at 504-515 shows a compositional bias: low complexity; that stretch reads QAHHAAQHHQQQ. 2 stretches are compositionally biased toward polar residues: residues 516-525 and 532-547; these read PTKQATVSPN and SSVT…NNNG. The residue at position 558 (Ser558) is a Phosphoserine. 2 C2H2-type zinc fingers span residues 573–596 and 602–624; these read FKCK…RSVH and FACM…LKTH.

The protein resides in the cytoplasm. The protein localises to the nucleus. Functionally, positive transcriptional factor that acts as a component of the stress responsive system. Recognizes and binds to the stress response element (STRE) which is involved in the response to various forms of stress (heat, oxidative, osmotic, etc.). Involved in the regulation of the CTT1, DDR2, HSP12 genes. The protein is Zinc finger protein MSN4 (MSN4) of Saccharomyces cerevisiae (strain ATCC 204508 / S288c) (Baker's yeast).